Reading from the N-terminus, the 543-residue chain is Intermediate filament protein ifb-2 (543 aa).

Polar residues predominate over residues 1 to 10 (MSAVSYSMHR). The tract at residues 1–27 (MSAVSYSMHRTTTTTSSSSHGGVSAGH) is disordered. The tract at residues 1–42 (MSAVSYSMHRTTTTTSSSSHGGVSAGHAAEEFVASAEREKQE) is head. The region spanning 39 to 388 (EKQEMQQLNS…KLVESEEGRF (350 aa)) is the IF rod domain. A coil 1A region spans residues 43-74 (MQQLNSRLEVYISRVRQLEDRNKELVIELDTL). The interval 75–88 (RGSLGNDIGQIKFK) is linker 1. The segment at 89–223 (FNDSLVKVRR…RIHSQEITEL (135 aa)) is coil 1B. The linker 12 stretch occupies residues 224 to 240 (RTLLAQAPADTREFFKN). Residues 241–387 (ELALAIREIK…RKLVESEEGR (147 aa)) form a coil 2 region. A tail region spans residues 388–542 (FTHVGQGVVV…SHIQTTVASS (155 aa)). The 119-residue stretch at 420-538 (TRSSFKRHAK…IEKASHIQTT (119 aa)) folds into the LTD domain.

It belongs to the intermediate filament family. Expression is restricted to a discrete circumferential subapical layer within the intestinal terminal web (known as the 'endotube'); this layer joins directly to the apical junction complexes that connect adjacent gut cells.

It localises to the cytoplasm. Its function is as follows. Cytoplasmic intermediate filaments provide mechanical strength to cells. Not essential protein. Component of the terminal web (organelle-depleted, intermediate filament-rich layer of cytoplasm that underlies the apical microvilli of polarized epithelial cells) in embryonic through to adult gut cells. Correct localization of filaments requires let-413. The protein is Intermediate filament protein ifb-2 (ifb-2) of Caenorhabditis elegans.